Consider the following 210-residue polypeptide: Signal peptidase complex catalytic subunit SEC11 (210 aa).

The Cytoplasmic portion of the chain corresponds to Met-1 to Asn-21. Residues Phe-22 to Ile-38 traverse the membrane as a helical; Signal-anchor for type II membrane protein segment. The Lumenal segment spans residues Tyr-39–Glu-210. Residue Asn-41 is glycosylated (N-linked (GlcNAc...) asparagine). Active-site charge relay system residues include Ser-53, His-92, and Asp-152. The C-terminal short (CTS) helix stretch occupies residues Val-196–Leu-207.

This sequence belongs to the peptidase S26B family. As to quaternary structure, component of the signal peptidase complex (SPC) composed of a catalytic subunit SEC11 and three accessory subunits SPC1, SPC2 and SPC3. The complex induces a local thinning of the ER membrane which is used to measure the length of the signal peptide (SP) h-region of protein substrates. This ensures the selectivity of the complex towards h-regions shorter than 18-20 amino acids. SPC associates with the translocon complex.

It is found in the endoplasmic reticulum membrane. It carries out the reaction Cleavage of hydrophobic, N-terminal signal or leader sequences from secreted and periplasmic proteins.. Functionally, catalytic component of the signal peptidase complex (SPC) which catalyzes the cleavage of N-terminal signal sequences from nascent proteins as they are translocated into the lumen of the endoplasmic reticulum. Specifically cleaves N-terminal signal peptides that contain a hydrophobic alpha-helix (h-region) shorter than 18-20 amino acids. This chain is Signal peptidase complex catalytic subunit SEC11 (SEC11), found in Coccidioides posadasii (strain C735) (Valley fever fungus).